Consider the following 451-residue polypeptide: Trigger factor (451 aa).

In terms of domain architecture, PPIase FKBP-type spans glycine 163 to proline 248.

Belongs to the FKBP-type PPIase family. Tig subfamily.

The protein resides in the cytoplasm. The catalysed reaction is [protein]-peptidylproline (omega=180) = [protein]-peptidylproline (omega=0). Its function is as follows. Involved in protein export. Acts as a chaperone by maintaining the newly synthesized protein in an open conformation. Functions as a peptidyl-prolyl cis-trans isomerase. The polypeptide is Trigger factor (Leptospira borgpetersenii serovar Hardjo-bovis (strain JB197)).